An 88-amino-acid polypeptide reads, in one-letter code: Large ribosomal subunit protein bL27 (88 aa).

The interval M1–Y26 is disordered.

Belongs to the bacterial ribosomal protein bL27 family.

The protein is Large ribosomal subunit protein bL27 of Prochlorococcus marinus (strain MIT 9211).